A 107-amino-acid polypeptide reads, in one-letter code: Pyrimidine/purine nucleoside phosphorylase (107 aa).

Belongs to the nucleoside phosphorylase PpnP family.

It catalyses the reaction a purine D-ribonucleoside + phosphate = a purine nucleobase + alpha-D-ribose 1-phosphate. The catalysed reaction is adenosine + phosphate = alpha-D-ribose 1-phosphate + adenine. The enzyme catalyses cytidine + phosphate = cytosine + alpha-D-ribose 1-phosphate. It carries out the reaction guanosine + phosphate = alpha-D-ribose 1-phosphate + guanine. It catalyses the reaction inosine + phosphate = alpha-D-ribose 1-phosphate + hypoxanthine. The catalysed reaction is thymidine + phosphate = 2-deoxy-alpha-D-ribose 1-phosphate + thymine. The enzyme catalyses uridine + phosphate = alpha-D-ribose 1-phosphate + uracil. It carries out the reaction xanthosine + phosphate = alpha-D-ribose 1-phosphate + xanthine. Functionally, catalyzes the phosphorolysis of diverse nucleosides, yielding D-ribose 1-phosphate and the respective free bases. Can use uridine, adenosine, guanosine, cytidine, thymidine, inosine and xanthosine as substrates. Also catalyzes the reverse reactions. This is Pyrimidine/purine nucleoside phosphorylase from Azoarcus sp. (strain BH72).